The chain runs to 192 residues: Large ribosomal subunit protein bL9 (192 aa).

Residues 172–192 (DALRPEDFFDPEADGVDEDEA) form a disordered region. A compositionally biased stretch (acidic residues) spans 179-192 (FFDPEADGVDEDEA).

The protein belongs to the bacterial ribosomal protein bL9 family.

In terms of biological role, binds to the 23S rRNA. This Rhizobium johnstonii (strain DSM 114642 / LMG 32736 / 3841) (Rhizobium leguminosarum bv. viciae) protein is Large ribosomal subunit protein bL9.